A 75-amino-acid chain; its full sequence is UPF0352 protein KPN78578_25810 (75 aa).

It belongs to the UPF0352 family.

This chain is UPF0352 protein KPN78578_25810, found in Klebsiella pneumoniae subsp. pneumoniae (strain ATCC 700721 / MGH 78578).